A 283-amino-acid chain; its full sequence is tRNA dimethylallyltransferase (283 aa).

The interval 5-8 (DSML) is interaction with substrate tRNA.

It belongs to the IPP transferase family. In terms of assembly, monomer. Mg(2+) serves as cofactor.

It carries out the reaction adenosine(37) in tRNA + dimethylallyl diphosphate = N(6)-dimethylallyladenosine(37) in tRNA + diphosphate. Its function is as follows. Catalyzes the transfer of a dimethylallyl group onto the adenine at position 37 in tRNAs that read codons beginning with uridine, leading to the formation of N6-(dimethylallyl)adenosine (i(6)A). The chain is tRNA dimethylallyltransferase from Desulforamulus reducens (strain ATCC BAA-1160 / DSM 100696 / MI-1) (Desulfotomaculum reducens).